We begin with the raw amino-acid sequence, 345 residues long: Probable dual-specificity RNA methyltransferase RlmN (345 aa).

The Proton acceptor role is filled by E98. A Radical SAM core domain is found at 104-332 (TYKRLTVCVS…VSIRYSRGLE (229 aa)). A disulfide bond links C111 and C337. The [4Fe-4S] cluster site is built by C118, C122, and C125. Residues 165–166 (GE), S195, 218–220 (SLH), and N294 contribute to the S-adenosyl-L-methionine site. C337 acts as the S-methylcysteine intermediate in catalysis.

This sequence belongs to the radical SAM superfamily. RlmN family. [4Fe-4S] cluster is required as a cofactor.

It localises to the cytoplasm. The catalysed reaction is adenosine(2503) in 23S rRNA + 2 reduced [2Fe-2S]-[ferredoxin] + 2 S-adenosyl-L-methionine = 2-methyladenosine(2503) in 23S rRNA + 5'-deoxyadenosine + L-methionine + 2 oxidized [2Fe-2S]-[ferredoxin] + S-adenosyl-L-homocysteine. The enzyme catalyses adenosine(37) in tRNA + 2 reduced [2Fe-2S]-[ferredoxin] + 2 S-adenosyl-L-methionine = 2-methyladenosine(37) in tRNA + 5'-deoxyadenosine + L-methionine + 2 oxidized [2Fe-2S]-[ferredoxin] + S-adenosyl-L-homocysteine. Its function is as follows. Specifically methylates position 2 of adenine 2503 in 23S rRNA and position 2 of adenine 37 in tRNAs. This is Probable dual-specificity RNA methyltransferase RlmN from Trichodesmium erythraeum (strain IMS101).